Consider the following 432-residue polypeptide: Homeobox protein Hox-D3 (432 aa).

Disordered stretches follow at residues 43–62 (YSTP…LDTD), 68–197 (CSIQ…SKRV), 253–280 (QKAK…AGHV), and 400–432 (HHGP…LTHL). Over residues 97–106 (NSQGGGGGSQ) the composition is skewed to gly residues. Positions 116-131 (PPQPPPPPPTLPPSSP) are enriched in pro residues. Residues 148 to 158 (NASSSSATISK) show a composition bias toward polar residues. The Antp-type hexapeptide motif lies at 160–165 (IFPWMK). Positions 194 to 253 (SKRVRTAYTSAQLVELEKEFHFNRYLCRPRRVEMANLLNLTERQIKIWFQNRRMKYKKDQ) form a DNA-binding region, homeobox.

It belongs to the Antp homeobox family.

The protein resides in the nucleus. Sequence-specific transcription factor which is part of a developmental regulatory system that provides cells with specific positional identities on the anterior-posterior axis. The polypeptide is Homeobox protein Hox-D3 (HOXD3) (Homo sapiens (Human)).